Reading from the N-terminus, the 360-residue chain is MKTSMQAKLDQLTTRLAELNDLLSREDITSNIDQYRKLTREHAELQPVVEQYGLWRQTMNDAATAQELLSDASMKDFAEEEIRASRERMETLESELQKMLLPKDPNDDRNIFLEIRAGTGGDESALFAGDLLRMYLRYAERNRWQVEMMSASESDLGGYKEVIVRIAGEAAYSKLKFESGGHRVQRVPATETQGRIHTSACTVAVMPEADEIGEVEINPADLRIDTFRASGAGGQHINKTDSAVRVTHLPTGIVVECQDDRSQHKNKDRALKVLAARIKDKQYHEQHAKEAATRKSLIGSGDRSERIRTYNFPQGRLTDHRINLTLYRLESIMEGDLDELIAALVSEHQAELLASLGDAD.

An N5-methylglutamine modification is found at Q235.

Belongs to the prokaryotic/mitochondrial release factor family. Post-translationally, methylated by PrmC. Methylation increases the termination efficiency of RF1.

Its subcellular location is the cytoplasm. Its function is as follows. Peptide chain release factor 1 directs the termination of translation in response to the peptide chain termination codons UAG and UAA. This Paraburkholderia phymatum (strain DSM 17167 / CIP 108236 / LMG 21445 / STM815) (Burkholderia phymatum) protein is Peptide chain release factor 1.